A 204-amino-acid polypeptide reads, in one-letter code: Nascent polypeptide-associated complex subunit alpha-like protein 3 (204 aa).

The span at M1–P23 shows a compositional bias: basic and acidic residues. Disordered regions lie at residues M1–K68 and G141–V165. Acidic residues predominate over residues E24–E43. S36 is subject to Phosphoserine. Residues G44–E59 are compositionally biased toward basic and acidic residues. The NAC-A/B domain occupies S56–L121. Residues G141–V152 show a composition bias toward low complexity. The span at Q153–G164 shows a compositional bias: acidic residues. Residues E159–T204 enclose the UBA domain.

Belongs to the NAC-alpha family.

May promote appropriate targeting of ribosome-nascent polypeptide complexes. This chain is Nascent polypeptide-associated complex subunit alpha-like protein 3, found in Arabidopsis thaliana (Mouse-ear cress).